Reading from the N-terminus, the 276-residue chain is Omega-amidase NIT2 (276 aa).

Residues 4 to 248 enclose the CN hydrolase domain; it reads FRLALIQLQI…EAIVYSDIDL (245 aa). S26 bears the Phosphoserine mark. The Proton acceptor role is filled by E43. An N6-acetyllysine; alternate modification is found at K68. K68 bears the N6-succinyllysine; alternate mark. Catalysis depends on K112, which acts as the Proton donor. Residues K123 and K130 each carry the N6-succinyllysine modification. C153 serves as the catalytic Nucleophile.

In terms of assembly, homodimer. As to expression, detected in fetal brain (at protein level). Ubiquitous. Detected in heart, brain, placenta, lung, liver, skeletal muscle, kidney, pancreas, prostate, spleen, thymus, prostate, testis, ovary, small intestine and colon.

It localises to the cytoplasm. It catalyses the reaction a monoamide of a dicarboxylate + H2O = a dicarboxylate + NH4(+). The enzyme catalyses 2-oxoglutaramate + H2O = 2-oxoglutarate + NH4(+). It carries out the reaction 2-oxosuccinamate + H2O = oxaloacetate + NH4(+). Functionally, has omega-amidase activity. The role of omega-amidase is to remove potentially toxic intermediates by converting 2-oxoglutaramate and 2-oxosuccinamate to biologically useful 2-oxoglutarate and oxaloacetate, respectively. The chain is Omega-amidase NIT2 (NIT2) from Homo sapiens (Human).